The primary structure comprises 327 residues: MGLPRRLLLLLLLATTCVPASQGLQCMQCESNQSCLVEECALGQDLCRTTVLREWQDDRELEVVTRGCAHSEKTNRTMSYRMGSMIISLTETVCATNLCNRPRPGARGRAFPQGRYLECASCTSLDQSCERGREQSLQCRYPTEHCIEVVTLQSTERSLKDEDYTRGCGSLPGCPGTAGFHSNQTFHFLKCCNYTHCNGGPVLDLQSFPPNGFQCYSCEGNNTLGCSSEEASLINCRGPMNQCLVATGLDVLGNRSYTVRGCATASWCQGSHVADSFPTHLNVSVSCCHGSGCNSPTGGAPRPGPAQLSLIASLLLTLGLWGVLLWT.

An N-terminal signal peptide occupies residues M1–G23. UPAR/Ly6 domains follow at residues L24–L117, L117–G212, and F213–G298. 3 cysteine pairs are disulfide-bonded: C26–C47, C29–C35, and C40–C68. An N-linked (GlcNAc...) asparagine glycan is attached at N32. N75 is a glycosylation site (N-linked (GlcNAc...) asparagine). 11 cysteine pairs are disulfide-bonded: C94-C99, C119-C146, C122-C129, C139-C168, C174-C191, C192-C197, C215-C243, C218-C226, C236-C262, C268-C287, and C288-C293. 5 N-linked (GlcNAc...) asparagine glycosylation sites follow: N183, N193, N221, N254, and N282. G298 carries the GPI-anchor amidated glycine lipid modification. A propeptide spans G299 to T327 (removed in mature form).

Monomer. Interacts (via the UPAR/Ly6 domains) with SRPX2. Interacts with MRC2. Interacts with SORL1 (via N-terminal ectodomain); this interaction decreases PLAUR internalization. The ternary complex composed of PLAUR-PLAU-SERPINE1 also interacts with SORL1. Interacts with CD82; this interaction prevents PLAUR from binding to its high affinity ligand PLAU. In terms of tissue distribution, expressed in angiogenic endothelial cells (at protein level).

It localises to the cell membrane. The protein resides in the secreted. Acts as a receptor for urokinase plasminogen activator. Plays a role in localizing and promoting plasmin formation. Mediates the proteolysis-independent signal transduction activation effects of U-PA. The sequence is that of Urokinase plasminogen activator surface receptor (Plaur) from Mus musculus (Mouse).